Consider the following 131-residue polypeptide: MAKRNVTAKKKVVKKNIARGVVYISATFNNTNITITDEMGNVICWSTAGGLGFKGSKKSTPYAAQQAVESALSKAKEHGVKEVGIKVQGPGSGRETAIKSVGATEGVKVLWIKDITPLPHNGCRPPKRRRV.

Belongs to the universal ribosomal protein uS11 family. In terms of assembly, part of the 30S ribosomal subunit. Interacts with proteins S7 and S18. Binds to IF-3.

In terms of biological role, located on the platform of the 30S subunit, it bridges several disparate RNA helices of the 16S rRNA. Forms part of the Shine-Dalgarno cleft in the 70S ribosome. This chain is Small ribosomal subunit protein uS11, found in Helicobacter pylori (strain G27).